Here is a 154-residue protein sequence, read N- to C-terminus: Xanthine-guanine phosphoribosyltransferase (154 aa).

5-phospho-alpha-D-ribose 1-diphosphate contacts are provided by residues 37-38 (RG), Arg-69, and 88-96 (EDLVDSGDT). Arg-69 lines the GMP pocket. Position 89 (Asp-89) interacts with Mg(2+). Positions 92 and 135 each coordinate guanine. Xanthine is bound by residues Asp-92 and Ile-135. GMP contacts are provided by residues 92-96 (DSGDT) and 134-135 (WI).

It belongs to the purine/pyrimidine phosphoribosyltransferase family. XGPT subfamily. In terms of assembly, homotetramer. Requires Mg(2+) as cofactor.

Its subcellular location is the cell inner membrane. It catalyses the reaction GMP + diphosphate = guanine + 5-phospho-alpha-D-ribose 1-diphosphate. The enzyme catalyses XMP + diphosphate = xanthine + 5-phospho-alpha-D-ribose 1-diphosphate. It carries out the reaction IMP + diphosphate = hypoxanthine + 5-phospho-alpha-D-ribose 1-diphosphate. It participates in purine metabolism; GMP biosynthesis via salvage pathway; GMP from guanine: step 1/1. Its pathway is purine metabolism; XMP biosynthesis via salvage pathway; XMP from xanthine: step 1/1. Purine salvage pathway enzyme that catalyzes the transfer of the ribosyl-5-phosphate group from 5-phospho-alpha-D-ribose 1-diphosphate (PRPP) to the N9 position of the 6-oxopurines guanine and xanthine to form the corresponding ribonucleotides GMP (guanosine 5'-monophosphate) and XMP (xanthosine 5'-monophosphate), with the release of PPi. To a lesser extent, also acts on hypoxanthine. The polypeptide is Xanthine-guanine phosphoribosyltransferase (Vibrio vulnificus (strain CMCP6)).